Consider the following 1601-residue polypeptide: Rap guanine nucleotide exchange factor 6 (1601 aa).

The residue at position 1 (Met1) is an N-acetylmethionine. Disordered regions lie at residues 1–22 (MNSP…ERTP) and 179–250 (PHPQ…QGRD). Ser3 bears the Phosphoserine mark. Residues 187–205 (SSSQSGCSIASDSGSSSLS) show a composition bias toward low complexity. A compositionally biased stretch (acidic residues) spans 228–241 (VDSEDDEEEDEEID). 280 to 399 (AFANMTMSVR…VEEEGEIVMV (120 aa)) contributes to the a nucleoside 3',5'-cyclic phosphate binding site. Residues 412–526 (KGHIVIKATP…LLNIACAAKA (115 aa)) form the N-terminal Ras-GEF domain. The PDZ domain occupies 530-615 (QVVLQKASRE…LTVKTNIFVF (86 aa)). Positions 749 to 835 (PDQVIRVFKV…GRYYLKNNME (87 aa)) constitute a Ras-associating domain. The 229-residue stretch at 860–1088 (STIEVATQLS…LDVQGGAHKK (229 aa)) folds into the Ras-GEF domain. Disordered regions lie at residues 1192–1274 (IRKK…SRSS), 1302–1324 (ESTG…QHGP), 1455–1478 (LEST…VYKT), and 1571–1601 (QRHN…VSAV). Composition is skewed to low complexity over residues 1229–1238 (SVASSLHSSP) and 1255–1274 (SAKS…SRSS). Acidic residues predominate over residues 1586–1601 (TDADSEADENEQVSAV).

In terms of assembly, interacts with the second PDZ domain of human PTP1e. In terms of tissue distribution, isoform 3 has highest expression levels in the brain, heart, liver, lung and placenta and is barely detectable in skeletal muscle, kidney and pancreas.

The protein resides in the cytoplasm. It localises to the cell membrane. Its function is as follows. Guanine nucleotide exchange factor (GEF) for Rap1A, Rap2A and M-Ras GTPases. Does not interact with cAMP. The protein is Rap guanine nucleotide exchange factor 6 (RAPGEF6) of Homo sapiens (Human).